A 399-amino-acid polypeptide reads, in one-letter code: Glutamyl-tRNA reductase (399 aa).

Substrate contacts are provided by residues threonine 45–arginine 48, serine 101, glutamate 106–glutamine 108, and glutamine 112. Cysteine 46 serves as the catalytic Nucleophile. Glycine 177 to glycine 182 contributes to the NADP(+) binding site.

The protein belongs to the glutamyl-tRNA reductase family. As to quaternary structure, homodimer.

The catalysed reaction is (S)-4-amino-5-oxopentanoate + tRNA(Glu) + NADP(+) = L-glutamyl-tRNA(Glu) + NADPH + H(+). It participates in porphyrin-containing compound metabolism; protoporphyrin-IX biosynthesis; 5-aminolevulinate from L-glutamyl-tRNA(Glu): step 1/2. Catalyzes the NADPH-dependent reduction of glutamyl-tRNA(Glu) to glutamate 1-semialdehyde (GSA). The polypeptide is Glutamyl-tRNA reductase (Clostridium kluyveri (strain ATCC 8527 / DSM 555 / NBRC 12016 / NCIMB 10680 / K1)).